The chain runs to 1133 residues: Eukaryotic translation initiation factor 3 subunit A (1133 aa).

The region spanning 317–498 (IQRMTSHVLI…HCVHFGTDLS (182 aa)) is the PCI domain. 2 coiled-coil regions span residues 573-700 (KKIE…YFER) and 784-886 (EEER…EADS). A compositionally biased stretch (basic and acidic residues) spans 810–893 (KEEERRRAEE…ADSWRDRRGG (84 aa)). The interval 810 to 1133 (KEEERRRAEE…DGWTDVKHHR (324 aa)) is disordered. Low complexity predominate over residues 895–909 (APAAAAQPNPAAQEA). Basic and acidic residues-rich tracts occupy residues 920-944 (GARE…RDVR), 954-1081 (VERR…DSAW), and 1097-1117 (TRQD…KEAR).

It belongs to the eIF-3 subunit A family. In terms of assembly, component of the eukaryotic translation initiation factor 3 (eIF-3) complex.

The protein localises to the cytoplasm. In terms of biological role, RNA-binding component of the eukaryotic translation initiation factor 3 (eIF-3) complex, which is involved in protein synthesis of a specialized repertoire of mRNAs and, together with other initiation factors, stimulates binding of mRNA and methionyl-tRNAi to the 40S ribosome. The eIF-3 complex specifically targets and initiates translation of a subset of mRNAs involved in cell proliferation. The chain is Eukaryotic translation initiation factor 3 subunit A from Aedes aegypti (Yellowfever mosquito).